Reading from the N-terminus, the 160-residue chain is CST complex subunit STN1 (160 aa).

A DNA-binding region (OB) is located at residues 41-133 (VEIVGTIVSR…QITANVAVAE (93 aa)).

Belongs to the STN1 family. Component of the CST complex, composed of CTC1, TEN1 and STN1. Interacts with CTC1. Interacts with TEN1. Interacts with POT1A. In vitro interaction with TEN1 and POT1A is mutually exclusive, indicating that POT1A and TEN1 may compete for the same binding site. Widely expressed.

It is found in the nucleus. The protein resides in the chromosome. It localises to the telomere. In terms of biological role, component of the CST complex, a complex that binds to single-stranded DNA and is required to protect telomeres from DNA degradation. The CST complex binds single-stranded DNA with high affinity in a sequence-independent manner, while isolated subunits bind DNA with low affinity by themselves. Associates with enzymatically active telomerase. Plays a genomewide role in DNA replication and facilitates re-replication at non-telomeric loci. The protein is CST complex subunit STN1 of Arabidopsis thaliana (Mouse-ear cress).